The chain runs to 83 residues: DNA-directed RNA polymerase subunit Rpo5 (83 aa).

The protein belongs to the archaeal Rpo5/eukaryotic RPB5 RNA polymerase subunit family. In terms of assembly, part of the RNA polymerase complex.

It is found in the cytoplasm. The catalysed reaction is RNA(n) + a ribonucleoside 5'-triphosphate = RNA(n+1) + diphosphate. In terms of biological role, DNA-dependent RNA polymerase (RNAP) catalyzes the transcription of DNA into RNA using the four ribonucleoside triphosphates as substrates. This Nitrosopumilus maritimus (strain SCM1) protein is DNA-directed RNA polymerase subunit Rpo5.